A 482-amino-acid polypeptide reads, in one-letter code: Anaerobic nitric oxide reductase flavorubredoxin (482 aa).

The tract at residues 30-210 (LRGSSYNSYL…PFSRLVTPKI (181 aa)) is zinc metallo-hydrolase. The Fe cation site is built by histidine 79, glutamate 81, aspartate 83, histidine 147, aspartate 166, and histidine 227. The Flavodoxin-like domain occupies 254–393 (ITLFYDTMSN…ICRQHGREIA (140 aa)). FMN is bound by residues 260 to 264 (TMSNN) and 342 to 369 (AFGS…EMSM). Residues 426 to 477 (GPCMQCSVCQWVYDPALGEPLQDVAPGTPWSDVPDNFLCPECSLGKDVFDVL) form the Rubredoxin-like domain. Fe cation is bound by residues cysteine 431, cysteine 434, cysteine 464, and cysteine 467.

The protein in the N-terminal section; belongs to the zinc metallo-hydrolase group 3 family. Homotetramer. Requires Fe cation as cofactor. FMN is required as a cofactor.

The protein resides in the cytoplasm. Its pathway is nitrogen metabolism; nitric oxide reduction. Its function is as follows. Anaerobic nitric oxide reductase; uses NADH to detoxify nitric oxide (NO), protecting several 4Fe-4S NO-sensitive enzymes. Has at least 2 reductase partners, only one of which (NorW, flavorubredoxin reductase) has been identified. NO probably binds to the di-iron center; electrons enter from the NorW at rubredoxin and are transferred sequentially to the FMN center and the di-iron center. Also able to function as an aerobic oxygen reductase. The polypeptide is Anaerobic nitric oxide reductase flavorubredoxin (Enterobacter sp. (strain 638)).